Consider the following 361-residue polypeptide: Serpentine receptor class epsilon-32 (361 aa).

Transmembrane regions (helical) follow at residues 34-54, 66-86, 124-144, 168-188, 195-215, 256-276, and 286-306; these read IIELVFYISCFHLMTISLYVM, ILYIPMFCVWYGLIAGKLITI, LLIFGGFVQWHYMYTVVYGIL, IPIALTIITQFLAISTSLSVL, FLSHLPWIISCSLGALAYLFI, LVFVVFFYVAFVSFGMFALAF, and FVENFLFLNPYPICFTAMLTI.

The protein belongs to the nematode receptor-like protein sre family.

Its subcellular location is the membrane. The protein is Serpentine receptor class epsilon-32 (sre-32) of Caenorhabditis elegans.